A 409-amino-acid chain; its full sequence is Glucan endo-1,6-beta-glucosidase B (409 aa).

The signal sequence occupies residues 1–16 (MKFILPLFTSLPVALA). N35 carries N-linked (GlcNAc...) asparagine glycosylation. E228 acts as the Proton donor in catalysis. E330 serves as the catalytic Nucleophile.

It belongs to the glycosyl hydrolase 5 (cellulase A) family.

The protein resides in the secreted. It catalyses the reaction Random hydrolysis of (1-&gt;6)-linkages in (1-&gt;6)-beta-D-glucans.. Beta-glucanases participate in the metabolism of beta-glucan, the main structural component of the cell wall. Acts on lutean, pustulan and 1,6-oligo-beta-D-glucosides. This Emericella nidulans (strain FGSC A4 / ATCC 38163 / CBS 112.46 / NRRL 194 / M139) (Aspergillus nidulans) protein is Glucan endo-1,6-beta-glucosidase B (exgB).